Reading from the N-terminus, the 180-residue chain is Large ribosomal subunit protein uL5 (180 aa).

The protein belongs to the universal ribosomal protein uL5 family. As to quaternary structure, part of the 50S ribosomal subunit; part of the 5S rRNA/L5/L18/L25 subcomplex. Contacts the 5S rRNA and the P site tRNA. Forms a bridge to the 30S subunit in the 70S ribosome.

In terms of biological role, this is one of the proteins that bind and probably mediate the attachment of the 5S RNA into the large ribosomal subunit, where it forms part of the central protuberance. In the 70S ribosome it contacts protein S13 of the 30S subunit (bridge B1b), connecting the 2 subunits; this bridge is implicated in subunit movement. Contacts the P site tRNA; the 5S rRNA and some of its associated proteins might help stabilize positioning of ribosome-bound tRNAs. The chain is Large ribosomal subunit protein uL5 from Clostridium botulinum (strain ATCC 19397 / Type A).